The sequence spans 165 residues: Ribosome maturation factor RimM (165 aa).

The region spanning 89–161 is the PRC barrel domain; that stretch reads EADTHYVVDL…KIVIKPVRQW (73 aa).

This sequence belongs to the RimM family. Binds ribosomal protein uS19.

It is found in the cytoplasm. Its function is as follows. An accessory protein needed during the final step in the assembly of 30S ribosomal subunit, possibly for assembly of the head region. Essential for efficient processing of 16S rRNA. May be needed both before and after RbfA during the maturation of 16S rRNA. It has affinity for free ribosomal 30S subunits but not for 70S ribosomes. The sequence is that of Ribosome maturation factor RimM from Clostridium botulinum (strain Eklund 17B / Type B).